A 150-amino-acid polypeptide reads, in one-letter code: Putative HTH-type transcriptional regulator rrf2-like (150 aa).

Residues 1–139 (MITQKMKYAL…DSLTLEDMLA (139 aa)) enclose the HTH rrf2-type domain.

This Rhodobacter capsulatus (strain ATCC BAA-309 / NBRC 16581 / SB1003) protein is Putative HTH-type transcriptional regulator rrf2-like.